We begin with the raw amino-acid sequence, 385 residues long: Queuine tRNA-ribosyltransferase (385 aa).

Residue Asp92 is the Proton acceptor of the active site. Substrate contacts are provided by residues 92–96 (DSGGF), Asp146, Gln188, and Gly215. Residues 246 to 252 (GVGHPED) form an RNA binding region. Asp265 (nucleophile) is an active-site residue. Residues 270 to 274 (TRTGR) are RNA binding; important for wobble base 34 recognition. Zn(2+)-binding residues include Cys303, Cys305, Cys308, and His334.

Belongs to the queuine tRNA-ribosyltransferase family. Homodimer. Within each dimer, one monomer is responsible for RNA recognition and catalysis, while the other monomer binds to the replacement base PreQ1. Zn(2+) is required as a cofactor.

It carries out the reaction 7-aminomethyl-7-carbaguanine + guanosine(34) in tRNA = 7-aminomethyl-7-carbaguanosine(34) in tRNA + guanine. Its pathway is tRNA modification; tRNA-queuosine biosynthesis. Catalyzes the base-exchange of a guanine (G) residue with the queuine precursor 7-aminomethyl-7-deazaguanine (PreQ1) at position 34 (anticodon wobble position) in tRNAs with GU(N) anticodons (tRNA-Asp, -Asn, -His and -Tyr). Catalysis occurs through a double-displacement mechanism. The nucleophile active site attacks the C1' of nucleotide 34 to detach the guanine base from the RNA, forming a covalent enzyme-RNA intermediate. The proton acceptor active site deprotonates the incoming PreQ1, allowing a nucleophilic attack on the C1' of the ribose to form the product. After dissociation, two additional enzymatic reactions on the tRNA convert PreQ1 to queuine (Q), resulting in the hypermodified nucleoside queuosine (7-(((4,5-cis-dihydroxy-2-cyclopenten-1-yl)amino)methyl)-7-deazaguanosine). This is Queuine tRNA-ribosyltransferase from Thermus thermophilus (strain ATCC 27634 / DSM 579 / HB8).